Consider the following 392-residue polypeptide: CD2 homolog (392 aa).

The signal sequence occupies residues 1 to 16 (MIIKLIFLICFKIVLS). At 17–222 (IDNKTKFNET…YLDFFQVTSY (206 aa)) the chain is on the extracellular side. Residues N39, N88, N92, N106, N148, N159, N183, N191, N198, and N204 are each glycosylated (N-linked (GlcNAc...) asparagine; by host). 2 disulfide bridges follow: C137-C205 and C144-C188. Residues 223 to 243 (IFYMIIFIVTGITVSILISII) traverse the membrane as a helical segment. The Cytoplasmic segment spans residues 244-392 (TFLFIRKRKH…ISLIHVDRII (149 aa)). The tract at residues 258 to 290 (ESPPPESNEEEQQCHHDTTSIHEPSPREPLLPK) is disordered. A compositionally biased stretch (basic and acidic residues) spans 269–283 (QQCHHDTTSIHEPSP). Tandem repeats lie at residues 319–324 (KPCPPP), 325–330 (KPCPPP), 331–336 (KPCPPP), 337–342 (KPCPPS), and 343–348 (KPCPPP). The tract at residues 319-348 (KPCPPPKPCPPPKPCPPPKPCPPSKPCPPP) is 5 X 6 AA tandem repeats of K-P-C-[PRS]-[P]-[PS]. Residues 328 to 357 (PPPKPCPPPKPCPPSKPCPPPEPYSPPKPC) form a disordered region.

The protein belongs to the asfivirus CD2 homolog protein family. As to quaternary structure, both glycosylated and nonglycosylated forms interact (via C-terminus) with the host AP-1 complex. In terms of processing, cleaved into two fragments of 63 kDa and 26 kDa containing respectively the glycosylated N-terminus and the nonglycosylated C-terminus. A full-length 89-kDa glycosylated form also exists.

The protein resides in the host cell membrane. It is found in the virion membrane. The protein localises to the host Golgi apparatus. Its function is as follows. May play an immunosuppressive role by inhibiting lymphocyte proliferation and subsequently facilitating viral replication and generalization of infection. Responsible for viral hemadsorption, which may help viral spread. Increases virus replication in the tick vector at the step of virus uptake or replication in the tick gut. May play a role in the host Golgi reorganization to yield viral factories. May play a role in host cell penetration. This Ornithodoros (relapsing fever ticks) protein is CD2 homolog.